The chain runs to 153 residues: Superoxide dismutase [Cu-Zn] (153 aa).

Cu cation is bound by residues H45, H47, and H62. C56 and C145 are joined by a disulfide. Zn(2+) is bound by residues H62, H70, H79, and D82. H119 contacts Cu cation.

This sequence belongs to the Cu-Zn superoxide dismutase family. Homodimer. The cofactor is Cu cation. Requires Zn(2+) as cofactor.

It localises to the cytoplasm. It carries out the reaction 2 superoxide + 2 H(+) = H2O2 + O2. Functionally, destroys radicals which are normally produced within the cells and which are toxic to biological systems. This Drosophila orena (Fruit fly) protein is Superoxide dismutase [Cu-Zn].